We begin with the raw amino-acid sequence, 287 residues long: Outer membrane protein TP0453 (287 aa).

Residues 1–24 (MIRRRYRGCTQGAWIVSVGMLFAS) form the signal peptide. Cys25 carries the N-palmitoyl cysteine lipid modification. The S-diacylglycerol cysteine moiety is linked to residue Cys25. Amphipathic helix stretches follow at residues 36–40 (PLGVV), 56–63 (ENLISRII), 69–77 (KADIKKIVD), 103–112 (YAFTNLIFSR), 155–162 (MSKMLSRL), 172–179 (PRFEKECT), 194–202 (GGHFITKLL), 240–250 (FPIQFLISRVL), and 270–279 (AERLASVISS).

As to quaternary structure, a mix of monomer and dimers; may integrate into the membrane as a dimer. In terms of processing, palmitoylated upon expression of a fusion protein with first 46 residues fused to PhoA in E.coli.

The protein localises to the cell outer membrane. In terms of biological role, might be involved in ligand transport, alters membrane permeability at acidic pH (4.0 to 5.5). Incubation of the non-lipidated form with lipid vesicles increases their permeability. The sequence is that of Outer membrane protein TP0453 from Treponema pallidum (strain Nichols).